The following is a 130-amino-acid chain: Small ribosomal subunit protein bS6 (130 aa).

The disordered stretch occupies residues A99 to E130. Residues K104 to A116 show a composition bias toward basic and acidic residues. The span at A119 to E130 shows a compositional bias: acidic residues.

Belongs to the bacterial ribosomal protein bS6 family.

In terms of biological role, binds together with bS18 to 16S ribosomal RNA. This chain is Small ribosomal subunit protein bS6, found in Yersinia enterocolitica serotype O:8 / biotype 1B (strain NCTC 13174 / 8081).